The sequence spans 1020 residues: Contactin-1 (1020 aa).

The N-terminal stretch at 1 to 20 is a signal peptide; sequence MKMPLLVSHLLLISLTSCLG. Ig-like C2-type domains lie at 41–131, 137–223, 241–326, 331–407, 413–500, and 504–603; these read PIFE…ATLS, PFPP…KSVF, PADI…ARIY, PEWV…AELK, PTFE…GTLV, and PTRI…LVVR. Disulfide bonds link cysteine 65-cysteine 114 and cysteine 158-cysteine 211. N-linked (GlcNAc...) asparagine glycans are attached at residues asparagine 208 and asparagine 258. Cysteines 263 and 310 form a disulfide. Asparagine 338 carries an N-linked (GlcNAc...) asparagine glycan. 2 cysteine pairs are disulfide-bonded: cysteine 352-cysteine 391 and cysteine 436-cysteine 484. Asparagine 457, asparagine 473, asparagine 494, and asparagine 521 each carry an N-linked (GlcNAc...) asparagine glycan. A disulfide bond links cysteine 526 and cysteine 585. An N-linked (GlcNAc...) asparagine glycan is attached at asparagine 593. 4 Fibronectin type-III domains span residues 608 to 706, 711 to 808, 813 to 908, and 909 to 1002; these read PPGG…TDGA, APSD…SAQD, APTE…APPS, and QPPR…TLSS. The tract at residues 695–719 is disordered; it reads SIPSNRIKTDGAAPNVAPSDVGGGG. The N-linked (GlcNAc...) asparagine glycan is linked to asparagine 935. The GPI-anchor amidated serine moiety is linked to residue serine 1001. A propeptide spans 1002-1020 (removed in mature form); sequence SSLLSLLLPSLGFLVYSEF.

It belongs to the immunoglobulin superfamily. Contactin family. As to quaternary structure, monomer. Interacts with CNTNAP1 in cis form. Binds to the carbonic-anhydrase like domain of PTPRZ1. Interacts with NOTCH1 and TNR. Detected in a complex with NRCAM and PTPRB. Interacts with TASOR. Expressed in the ovary and in Sertoli cells of the testis.

Its subcellular location is the cell membrane. Functionally, contactins mediate cell surface interactions during nervous system development. Involved in the formation of paranodal axo-glial junctions in myelinated peripheral nerves and in the signaling between axons and myelinating glial cells via its association with CNTNAP1. Participates in oligodendrocytes generation by acting as a ligand of NOTCH1. Its association with NOTCH1 promotes NOTCH1 activation through the released notch intracellular domain (NICD) and subsequent translocation to the nucleus. Interaction with TNR induces a repulsion of neurons and an inhibition of neurite outgrowth. The polypeptide is Contactin-1 (Cntn1) (Mus musculus (Mouse)).